A 766-amino-acid polypeptide reads, in one-letter code: Serine/threonine-protein kinase tousled-like 1 (766 aa).

Residues 1-198 form a disordered region; sequence MSVQSSSGSL…PSPTALAFGD (198 aa). The segment covering 20–33 has biased composition (low complexity); it reads STSPTPGSAAAARS. A Phosphothreonine modification is found at T38. Residues 43-64 show a composition bias toward basic and acidic residues; the sequence is RPREGAMDELHSLDPRRQELLE. 3 positions are modified to phosphoserine: S54, S77, and S80. The segment covering 68-85 has biased composition (low complexity); that stretch reads TGVATGSTGSTGSCSVGA. The span at 87–103 shows a compositional bias: polar residues; the sequence is ASTNNESSNHSFGSLGS. Residues 105 to 121 are compositionally biased toward basic and acidic residues; it reads SDKESETPEKKQSESSR. Phosphoserine is present on residues S134, S159, S174, and S176. A compositionally biased stretch (low complexity) spans 170 to 192; the sequence is SPQNSHSHSTPSSSVRPNSPSPT. A coiled-coil region spans residues 229-280; sequence NQDLEKKEGRIDDLLRANCDLRRQIDDQQKLLEKYKERLNKCISMSKKLLIE. The interval 344 to 381 is disordered; sequence KLLGKRKPPTANNSQAPATNSEAKQRKTKAVNGAENDP. The segment covering 353–365 has biased composition (polar residues); the sequence is TANNSQAPATNSE. Positions 397 to 445 form a coiled coil; the sequence is HEQEEIFKLRLGHLKKEEAEIQAELERLERVRNLHIRELKRINNEDNSQ. The Protein kinase domain maps to 456–734; it reads YLLLHLLGRG…VHQLANDPYL (279 aa). ATP-binding positions include 462-470 and K485; that span reads LGRGGFSEV. Catalysis depends on D586, which acts as the Proton acceptor. Position 743 is a phosphoserine (S743). The interval 745–766 is disordered; sequence GNLHMSGLTATPTPPSSSIITY.

Belongs to the protein kinase superfamily. Ser/Thr protein kinase family. As to quaternary structure, heterodimer with TLK2. Mg(2+) serves as cofactor. In terms of tissue distribution, ubiquitously expressed in all tissues examined.

Its subcellular location is the nucleus. The enzyme catalyses L-seryl-[protein] + ATP = O-phospho-L-seryl-[protein] + ADP + H(+). The catalysed reaction is L-threonyl-[protein] + ATP = O-phospho-L-threonyl-[protein] + ADP + H(+). With respect to regulation, cell-cycle regulated, maximal activity in S-phase. Inactivated by phosphorylation at Ser-743, potentially by CHEK1. Rapidly and transiently inhibited by phosphorylation following the generation of DNA double-stranded breaks during S-phase. This is cell cycle checkpoint and ATM-pathway dependent and appears to regulate processes involved in chromatin assembly. Isoform 3 protects the cells from the ionizing radiation by facilitating the repair of DSBs. In vitro, phosphorylates histone H3 at 'Ser-10'. This Mus musculus (Mouse) protein is Serine/threonine-protein kinase tousled-like 1 (Tlk1).